Here is a 420-residue protein sequence, read N- to C-terminus: 3-isopropylmalate dehydratase large subunit (420 aa).

Residues C300, C360, and C363 each coordinate [4Fe-4S] cluster.

This sequence belongs to the aconitase/IPM isomerase family. LeuC type 2 subfamily. Heterodimer of LeuC and LeuD. The cofactor is [4Fe-4S] cluster.

The catalysed reaction is (2R,3S)-3-isopropylmalate = (2S)-2-isopropylmalate. It participates in amino-acid biosynthesis; L-leucine biosynthesis; L-leucine from 3-methyl-2-oxobutanoate: step 2/4. Functionally, catalyzes the isomerization between 2-isopropylmalate and 3-isopropylmalate, via the formation of 2-isopropylmaleate. This chain is 3-isopropylmalate dehydratase large subunit, found in Syntrophus aciditrophicus (strain SB).